The sequence spans 1528 residues: 5'-3' exoribonuclease 1 (1528 aa).

Disordered regions lie at residues 1246–1331 (SKKA…KSSE), 1431–1455 (PPPA…NVSD), and 1470–1528 (LKKF…DEST). Residues 1274–1304 (QSEEKLRKERAHDLLNFIKKDTNEKNSESVD) show a composition bias toward basic and acidic residues. Residues 1317–1326 (AKKVLLKRPA) show a composition bias toward basic residues. The segment covering 1500 to 1517 (SSGTNSTECQSPKSQSNA) has biased composition (polar residues). At T1506 the chain carries Phosphothreonine. S1510 bears the Phosphoserine mark. Positions 1518-1528 (ADRDNKKDEST) are enriched in basic and acidic residues.

This sequence belongs to the 5'-3' exonuclease family. Mg(2+) is required as a cofactor.

The protein resides in the cytoplasm. It is found in the perinuclear region. It localises to the P-body. Its activity is regulated as follows. 3'-phosphoadenosine 5'-phosphate (pAp) is an inhibitor of KEM1. Sodium-induced GCN4 expression reduces pAp accumulation by activating HAL2 expression, and therefore maintains mRNA degradation capacity which is likely to be important for the accurate and rapid adaptation of gene expression to salt stress. Multifunctional protein that exhibits several independent functions at different levels of the cellular processes. 5'-3' exonuclease component of the nonsense-mediated mRNA decay (NMD) which is a highly conserved mRNA degradation pathway, an RNA surveillance system whose role is to identify and rid cells of mRNA with premature termination codons and thus prevents accumulation of potentially harmful truncated proteins. The NMD pathway has a second role regulating the decay of wild-type mRNAs, and especially mRNAs that are important for telomere functions. Participate in CTH2-mediated and VTS1-mediated mRNA turnover. Involved in the degradation of several hypomodified mature tRNA species and participates in the 5'-processing or the degradation of the snoRNA precursors and rRNA processing. Involved in defense against virus and suppresses viral RNA recombination by rapidly removing the 5'-truncated RNAs, the substrates of recombination, and thus reducing the chance for recombination to occur in the parental strain. Required for the assembly of the virus-like particles of the Ty3 retrotransposon and contributes to the efficient generation of narnavirus 20S RNA by playing a major role in the elimination of the non-viral upstream sequences from the primary transcripts. Degrades single-stranded DNA (ss-DNA) and can renature complementary ss-DNA as well as catalyzes the formation of heteroduplex DNA from circular ss-DNA and homologous linear ds-DNA in vitro. Acts as a microtubule-associated protein which interacts with cytoplasmic microtubules through beta-tubulin and promotes in vitro assembly of tubulin into microtubules. Associates with microtubule functions such as chromosome transmission, nuclear migration, and SPB duplication. Has also a role in G1 to S transition and is involved in nuclear fusion during karyogamy. Required for the expression of ROK1 at the post-transcriptional level and for the alpha-factor induction of the karyogamy genes KAR3 and KAR4. Plays a role in filamentous growth. This chain is 5'-3' exoribonuclease 1 (XRN1), found in Saccharomyces cerevisiae (strain ATCC 204508 / S288c) (Baker's yeast).